We begin with the raw amino-acid sequence, 504 residues long: Glucose-6-phosphate isomerase (504 aa).

Glu333 (proton donor) is an active-site residue. Residues His364 and Lys473 contribute to the active site.

It belongs to the GPI family.

The protein localises to the cytoplasm. It catalyses the reaction alpha-D-glucose 6-phosphate = beta-D-fructose 6-phosphate. The protein operates within carbohydrate biosynthesis; gluconeogenesis. Its pathway is carbohydrate degradation; glycolysis; D-glyceraldehyde 3-phosphate and glycerone phosphate from D-glucose: step 2/4. In terms of biological role, catalyzes the reversible isomerization of glucose-6-phosphate to fructose-6-phosphate. The chain is Glucose-6-phosphate isomerase from Xanthomonas oryzae pv. oryzae (strain PXO99A).